The chain runs to 322 residues: Acetyl-coenzyme A carboxylase carboxyl transferase subunit alpha (322 aa).

A CoA carboxyltransferase C-terminal domain is found at 39-293; that stretch reads RLAAKSQQLT…KRALAESLRQ (255 aa).

This sequence belongs to the AccA family. As to quaternary structure, acetyl-CoA carboxylase is a heterohexamer composed of biotin carboxyl carrier protein (AccB), biotin carboxylase (AccC) and two subunits each of ACCase subunit alpha (AccA) and ACCase subunit beta (AccD).

The protein localises to the cytoplasm. The enzyme catalyses N(6)-carboxybiotinyl-L-lysyl-[protein] + acetyl-CoA = N(6)-biotinyl-L-lysyl-[protein] + malonyl-CoA. Its pathway is lipid metabolism; malonyl-CoA biosynthesis; malonyl-CoA from acetyl-CoA: step 1/1. Functionally, component of the acetyl coenzyme A carboxylase (ACC) complex. First, biotin carboxylase catalyzes the carboxylation of biotin on its carrier protein (BCCP) and then the CO(2) group is transferred by the carboxyltransferase to acetyl-CoA to form malonyl-CoA. The chain is Acetyl-coenzyme A carboxylase carboxyl transferase subunit alpha from Ralstonia nicotianae (strain ATCC BAA-1114 / GMI1000) (Ralstonia solanacearum).